The sequence spans 397 residues: LIM/homeobox protein Lhx9 (397 aa).

LIM zinc-binding domains are found at residues 69-130 and 131-193; these read ALCA…RFSV and QRCA…LLQG. Disordered stretches follow at residues 248-272, 330-365, and 378-397; these read ENEA…RMRT, ENGG…LTDL, and SNMD…TNLF. Positions 267 to 326 form a DNA-binding region, homeobox; sequence TKRMRTSFKHHQLRTMKSYFAINHNPDAKDLKQLAQKTGLTKRVLQVWFQNARAKFRRNL. Residues 353-365 show a composition bias toward low complexity; that stretch reads LTPPGTATTLTDL. Over residues 387–397 the composition is skewed to polar residues; sequence SPSQTTLTNLF.

In terms of assembly, interacts with LDB1 and LDB2. As to expression, expressed in the dorsal thalamus and inner nuclei of the cerebellum.

Its subcellular location is the nucleus. In terms of biological role, involved in gonadal development. This chain is LIM/homeobox protein Lhx9 (Lhx9), found in Mus musculus (Mouse).